Consider the following 631-residue polypeptide: Pro-interleukin-16 (631 aa).

Disordered regions lie at residues 30-269 (ENPG…FPLT) and 317-344 (PKEGASPTSSSNEDSAANGSAETSASDT). A compositionally biased stretch (low complexity) spans 132 to 144 (SSSSSSIKQRISS). Ser-221 is modified (phosphoserine). The segment covering 322–344 (SPTSSSNEDSAANGSAETSASDT) has biased composition (polar residues). The tract at residues 405-501 (KQLDSIHVTI…IVTRKLTAES (97 aa)) is interaction with PPP1R12A, PPP1R12B and PPP1R12C. PDZ domains lie at 411-496 (HVTI…VTRK) and 533-618 (TVTL…IRRK).

Homotetramer. Pro-interleukin-16 interacts (via PDZ 2 domain) with PPP1R12A, PPP1R12B and PPP1R12C. Pro-interleukin-16 interacts with GRIN2A. Pro-interleukin-16 interacts with GABPB1. Pro-interleukin-16 interacts (via PDZ 3 domain) with HDAC3.

The protein localises to the secreted. Its subcellular location is the cytoplasm. It localises to the nucleus. Its function is as follows. Interleukin-16 stimulates a migratory response in CD4+ lymphocytes, monocytes, and eosinophils. Primes CD4+ T-cells for IL-2 and IL-15 responsiveness. Also induces T-lymphocyte expression of interleukin 2 receptor. Ligand for CD4. Pro-interleukin-16 is involved in cell cycle progression in T-cells. Appears to be involved in transcriptional regulation of SKP2 and is probably part of a transcriptional repression complex on the core promoter of the SKP2 gene. May act as a scaffold for GABPB1 (the DNA-binding subunit the GABP transcription factor complex) and HDAC3 thus maintaining transcriptional repression and blocking cell cycle progression in resting T-cells. In Chlorocebus aethiops (Green monkey), this protein is Pro-interleukin-16 (IL16).